Consider the following 297-residue polypeptide: Formamidopyrimidine-DNA glycosylase (297 aa).

Catalysis depends on Pro-2, which acts as the Schiff-base intermediate with DNA. The Proton donor role is filled by Glu-3. Lys-58 acts as the Proton donor; for beta-elimination activity in catalysis. His-104, Arg-127, and Lys-170 together coordinate DNA. The FPG-type zinc-finger motif lies at 261-297 (NVYDREGEACRTPGCTGTVERMTQAGRSTFHCPQCQR). Arg-287 acts as the Proton donor; for delta-elimination activity in catalysis.

This sequence belongs to the FPG family. In terms of assembly, monomer. Zn(2+) is required as a cofactor.

The enzyme catalyses Hydrolysis of DNA containing ring-opened 7-methylguanine residues, releasing 2,6-diamino-4-hydroxy-5-(N-methyl)formamidopyrimidine.. It catalyses the reaction 2'-deoxyribonucleotide-(2'-deoxyribose 5'-phosphate)-2'-deoxyribonucleotide-DNA = a 3'-end 2'-deoxyribonucleotide-(2,3-dehydro-2,3-deoxyribose 5'-phosphate)-DNA + a 5'-end 5'-phospho-2'-deoxyribonucleoside-DNA + H(+). Its function is as follows. Involved in base excision repair of DNA damaged by oxidation or by mutagenic agents. Acts as a DNA glycosylase that recognizes and removes damaged bases. Has a preference for oxidized purines, such as 7,8-dihydro-8-oxoguanine (8-oxoG). Has AP (apurinic/apyrimidinic) lyase activity and introduces nicks in the DNA strand. Cleaves the DNA backbone by beta-delta elimination to generate a single-strand break at the site of the removed base with both 3'- and 5'-phosphates. The protein is Formamidopyrimidine-DNA glycosylase of Allorhizobium ampelinum (strain ATCC BAA-846 / DSM 112012 / S4) (Agrobacterium vitis (strain S4)).